Reading from the N-terminus, the 220-residue chain is Iron-sulfur cluster repair protein YtfE (220 aa).

It belongs to the RIC family. YtfE subfamily. As to quaternary structure, homodimer.

The protein resides in the cytoplasm. Di-iron-containing protein involved in the repair of iron-sulfur clusters damaged by oxidative and nitrosative stress conditions. This chain is Iron-sulfur cluster repair protein YtfE, found in Citrobacter koseri (strain ATCC BAA-895 / CDC 4225-83 / SGSC4696).